Reading from the N-terminus, the 146-residue chain is Large ribosomal subunit protein uL15 (146 aa).

Composition is skewed to basic residues over residues 1-13 (MIRK…RMRG) and 22-38 (SKKR…GQAG). A disordered region spans residues 1–38 (MIRKRRKITRMRGSRTVGGGCSKKRRGAGHRGGRGQAG).

The protein belongs to the universal ribosomal protein uL15 family. Part of the 50S ribosomal subunit.

Functionally, binds to the 23S rRNA. The sequence is that of Large ribosomal subunit protein uL15 from Methanothermobacter thermautotrophicus (strain ATCC 29096 / DSM 1053 / JCM 10044 / NBRC 100330 / Delta H) (Methanobacterium thermoautotrophicum).